We begin with the raw amino-acid sequence, 509 residues long: Scavenger receptor class B member 1 (509 aa).

At 1-11 (MGNLSRARRVT) the chain is on the cytoplasmic side. The helical transmembrane segment at 12–32 (AALGFIGLLFAVLGIIMIVMV) threads the bilayer. Over 33–440 (PSIIKQQVLK…YIQLVLMPKV (408 aa)) the chain is Extracellular. N-linked (GlcNAc...) asparagine glycans are attached at residues Asn102, Asn108, Asn173, Asn212, Asn227, Asn255, Asn310, Asn330, and Asn383. A disulfide bond links Cys251 and Cys384. The helical transmembrane segment at 441 to 461 (LHYAQYVLLALGCVLLLIPII) threads the bilayer. Residues 462–509 (YQIRSQEKCYLFWISFKKGSKDKEAVQAYSEFLMTSAPKGTVLQEARL) are Cytoplasmic-facing.

This sequence belongs to the CD36 family. N-glycosylated. Post-translationally, the six cysteines of the extracellular domain are all involved in intramolecular disulfide bonds.

It is found in the cell membrane. The protein localises to the membrane. The protein resides in the caveola. In terms of biological role, receptor for different ligands such as phospholipids, cholesterol ester, lipoproteins, phosphatidylserine and apoptotic cells. Receptor for HDL, mediating selective uptake of cholesteryl ether and HDL-dependent cholesterol efflux. Also facilitates the flux of free and esterified cholesterol between the cell surface and apoB-containing lipoproteins and modified lipoproteins, although less efficiently than HDL. May be involved in the phagocytosis of apoptotic cells, via its phosphatidylserine binding activity. The sequence is that of Scavenger receptor class B member 1 (SCARB1) from Bos taurus (Bovine).